The sequence spans 148 residues: Deoxyuridine 5'-triphosphate nucleotidohydrolase (148 aa).

Substrate is bound by residues 65-67, Asn-78, 82-84, and Lys-92; these read RSG and TID.

Belongs to the dUTPase family. It depends on Mg(2+) as a cofactor.

The catalysed reaction is dUTP + H2O = dUMP + diphosphate + H(+). Its pathway is pyrimidine metabolism; dUMP biosynthesis; dUMP from dCTP (dUTP route): step 2/2. Functionally, this enzyme is involved in nucleotide metabolism: it produces dUMP, the immediate precursor of thymidine nucleotides and it decreases the intracellular concentration of dUTP so that uracil cannot be incorporated into DNA. This Chlorobium luteolum (strain DSM 273 / BCRC 81028 / 2530) (Pelodictyon luteolum) protein is Deoxyuridine 5'-triphosphate nucleotidohydrolase.